A 1488-amino-acid chain; its full sequence is WD repeat-containing protein 7 (1488 aa).

7 WD repeats span residues A17–P56, G62–F104, I156–Q199, V324–E366, N404–L443, G462–I507, and R558–C597. Disordered stretches follow at residues E761–R781 and G911–I947. Residues V768 to R781 show a composition bias toward basic and acidic residues. Phosphoserine is present on S935. The segment covering P937 to I947 has biased composition (polar residues). 2 WD repeats span residues P1349–I1388 and G1390–I1430. S1454 bears the Phosphoserine mark.

The sequence is that of WD repeat-containing protein 7 (Wdr7) from Rattus norvegicus (Rat).